Consider the following 234-residue polypeptide: Glucosamine-6-phosphate deaminase (234 aa).

Asp-63 acts as the Proton acceptor; for enolization step in catalysis. Asn-129 acts as the For ring-opening step in catalysis. Catalysis depends on His-131, which acts as the Proton acceptor; for ring-opening step. Glu-136 (for ring-opening step) is an active-site residue.

Belongs to the glucosamine/galactosamine-6-phosphate isomerase family. NagB subfamily.

It carries out the reaction alpha-D-glucosamine 6-phosphate + H2O = beta-D-fructose 6-phosphate + NH4(+). It functions in the pathway amino-sugar metabolism; N-acetylneuraminate degradation; D-fructose 6-phosphate from N-acetylneuraminate: step 5/5. In terms of biological role, catalyzes the reversible isomerization-deamination of glucosamine 6-phosphate (GlcN6P) to form fructose 6-phosphate (Fru6P) and ammonium ion. In Listeria welshimeri serovar 6b (strain ATCC 35897 / DSM 20650 / CCUG 15529 / CIP 8149 / NCTC 11857 / SLCC 5334 / V8), this protein is Glucosamine-6-phosphate deaminase.